Consider the following 528-residue polypeptide: Lysine--tRNA ligase (528 aa).

The 'HIGH' region motif lies at 44 to 52; that stretch reads PSGLPHIGT. The 'KMSKS' region signature appears at 290–294; the sequence is KISKS. Residue Lys293 coordinates ATP.

The protein belongs to the class-I aminoacyl-tRNA synthetase family.

It localises to the cytoplasm. It carries out the reaction tRNA(Lys) + L-lysine + ATP = L-lysyl-tRNA(Lys) + AMP + diphosphate. This is Lysine--tRNA ligase (lysS) from Rickettsia prowazekii (strain Madrid E).